The sequence spans 431 residues: uncharacterized protein (431 aa).

Helical transmembrane passes span valine 33 to leucine 53, phenylalanine 63 to leucine 83, valine 111 to serine 131, valine 143 to leucine 163, leucine 197 to threonine 217, alanine 241 to leucine 261, glycine 273 to methionine 293, leucine 318 to methionine 338, alanine 358 to leucine 378, serine 383 to leucine 403, and threonine 407 to alanine 427.

This sequence to M.tuberculosis Rv1510 and Rv3630.

The protein localises to the cell membrane. This is an uncharacterized protein from Mycobacterium bovis (strain ATCC BAA-935 / AF2122/97).